Consider the following 207-residue polypeptide: MDTFIREFDMALRAIAGATRSGRANPADRLAPDDGQLEQAERRHVAGLMRVNHVGEVCAQALYQAQKLTARNDDVRTQMDTAAREEEDHLAWCAERLRELDSRPSLLNPLWYAGAFAIGFLAGRAGDKVSLGFVAETEHQVEQHLSGHLDQLPAADGRSRAILEQMRDDEIRHGDAARAAGGVPLPAPVRALMRGASRVMTTAAYRI.

Residues Glu56, Glu86, His89, Glu138, Glu170, and His173 each contribute to the Fe cation site.

This sequence belongs to the COQ7 family. Fe cation is required as a cofactor.

The protein localises to the cell membrane. The enzyme catalyses a 5-methoxy-2-methyl-3-(all-trans-polyprenyl)benzene-1,4-diol + AH2 + O2 = a 3-demethylubiquinol + A + H2O. It functions in the pathway cofactor biosynthesis; ubiquinone biosynthesis. Catalyzes the hydroxylation of 2-nonaprenyl-3-methyl-6-methoxy-1,4-benzoquinol during ubiquinone biosynthesis. This is 3-demethoxyubiquinol 3-hydroxylase from Cupriavidus pinatubonensis (strain JMP 134 / LMG 1197) (Cupriavidus necator (strain JMP 134)).